The chain runs to 73 residues: Conotoxin im23b (73 aa).

The signal sequence occupies residues 1-22 (MIMRMTLTLFVLVVMTAASASG). The propeptide occupies 23 to 28 (DALTEA). Disulfide bonds link C34/C41, C45/C55, and C56/C71.

This sequence belongs to the conotoxin K superfamily. As to expression, expressed by the venom duct.

It is found in the secreted. Functionally, neurotoxin that induces excitatory symptoms in mice following intracranial administration. No symptoms are observed after intraperitoneal and intravenous (tail vein) injections. The protein is Conotoxin im23b of Conus imperialis (Imperial cone).